The sequence spans 144 residues: MVKKILLINGPNLNSLGTREPEKYGTTTLKDIEQAAIEQAKAKGSEMAVYQNNTEGFIVDRIHEAKKQGVEYILINAGAYTHTSVAIRDALSAVAIPFIEIHITNVHSREEFRHKSYLSDTAVAVICGLGVYGYTAAIDFALNK.

Tyr-24 serves as the catalytic Proton acceptor. Residues Asn-76, His-82, and Asp-89 each contribute to the substrate site. His-102 serves as the catalytic Proton donor. Substrate-binding positions include Ile-103 to Thr-104 and Arg-113.

It belongs to the type-II 3-dehydroquinase family. As to quaternary structure, homododecamer. Adopts a ring-like structure, composed of an arrangement of two hexameric rings stacked on top of one another.

It carries out the reaction 3-dehydroquinate = 3-dehydroshikimate + H2O. It functions in the pathway aromatic compound metabolism; 3,4-dihydroxybenzoate biosynthesis; 3,4-dihydroxybenzoate from 3-dehydroquinate: step 1/2. Its function is as follows. Is involved in the catabolism of quinate. Allows the utilization of quinate as carbon source via the beta-ketoadipate pathway. The polypeptide is Catabolic 3-dehydroquinase (Debaryomyces hansenii (strain ATCC 36239 / CBS 767 / BCRC 21394 / JCM 1990 / NBRC 0083 / IGC 2968) (Yeast)).